The following is a 149-amino-acid chain: Ribosome-binding factor A (149 aa).

Positions 124–149 are disordered; that stretch reads AKLREGAVPAGDADPYKTSSKSESEE.

Belongs to the RbfA family. As to quaternary structure, monomer. Binds 30S ribosomal subunits, but not 50S ribosomal subunits or 70S ribosomes.

It localises to the cytoplasm. Functionally, one of several proteins that assist in the late maturation steps of the functional core of the 30S ribosomal subunit. Associates with free 30S ribosomal subunits (but not with 30S subunits that are part of 70S ribosomes or polysomes). Required for efficient processing of 16S rRNA. May interact with the 5'-terminal helix region of 16S rRNA. In Corynebacterium glutamicum (strain R), this protein is Ribosome-binding factor A.